A 431-amino-acid polypeptide reads, in one-letter code: GTPase Obg (431 aa).

One can recognise an Obg domain in the interval 1–158; sequence MFVDQVKVDV…LTIRMELKVL (158 aa). An OBG-type G domain is found at 159–335; the sequence is ADVGLVGFPS…LLAKTADLLD (177 aa). GTP-binding positions include 165–172, 190–194, 212–215, 282–285, and 316–318; these read GFPSVGKS, FTTLV, DLPG, TKMD, and SSI. The Mg(2+) site is built by Ser172 and Thr192. The OCT domain maps to 353–431; sequence YTTEADADFS…ILDYSFQFMD (79 aa).

Belongs to the TRAFAC class OBG-HflX-like GTPase superfamily. OBG GTPase family. Monomer. The cofactor is Mg(2+).

It is found in the cytoplasm. Its function is as follows. An essential GTPase which binds GTP, GDP and possibly (p)ppGpp with moderate affinity, with high nucleotide exchange rates and a fairly low GTP hydrolysis rate. Plays a role in control of the cell cycle, stress response, ribosome biogenesis and in those bacteria that undergo differentiation, in morphogenesis control. The chain is GTPase Obg from Lactiplantibacillus plantarum (strain ATCC BAA-793 / NCIMB 8826 / WCFS1) (Lactobacillus plantarum).